A 355-amino-acid polypeptide reads, in one-letter code: Replication-associated protein (355 aa).

The region spanning 11-114 is the CRESS-DNA virus Rep endonuclease domain; that stretch reads SHRNANTFLT…PLAVFERGTF (104 aa). The short motif at 18–21 is the RCR-1 element; it reads FLTY. Residues E52, H60, and H62 each contribute to the a divalent metal cation site. An RCR-2 motif is present at residues 60–62; sequence HLH. The active-site For DNA cleavage activity is the Y100. The short motif at 100–103 is the RCR-3 element; it reads YILK. Residue E104 participates in a divalent metal cation binding. The interval 175–187 is oligomerization; it reads SANKLFPEIQEEF. ATP is bound at residue 229-236; sequence GPTRTGKS. Residues 252–270 are transactivation; it reads VDWSSYNEDAIYNIVDDIP. The Nuclear localization signal signature appears at 292–303; that stretch reads KYGKKKKVQKKS.

Belongs to the geminiviridae Rep protein family. In terms of assembly, homooligomer. Rep binds to repeated DNA motifs (iterons). Forms the O-complex, which is a Rep-DNA complex involved in the initiation of RCR. Part of the C- and V-complexes which are RepA-Rep-DNA complexes involved in the c-sense and v-sense transcription. Requires Mg(2+) as cofactor. The cofactor is Mn(2+).

It is found in the host nucleus. Essential for the replication of viral ssDNA. The closed circular ssDNA genome is first converted to a superhelical dsDNA. Rep binds a specific region at the genome origin of replication. It introduces an endonucleolytic nick within the conserved sequence 5'-TAATATTAC-3' in the intergenic region of the genome present in all geminiviruses, thereby initiating the rolling circle replication (RCR). Following cleavage, binds covalently to the 5'-phosphate of DNA as a tyrosyl ester. The cleavage gives rise to a free 3'-OH that serves as a primer for the cellular DNA polymerase. The polymerase synthesizes the (+) strand DNA by rolling circle mechanism. After one round of replication, a Rep-catalyzed nucleotidyl transfer reaction releases a circular single-stranded virus genome, thereby terminating the replication. Displays origin-specific DNA cleavage, nucleotidyl transferase, ATPase and helicase activities. Acts as an inhibitor of C-sense gene transcription. This chain is Replication-associated protein, found in Maize streak virus genotype A (isolate South Africa) (MSV).